We begin with the raw amino-acid sequence, 1394 residues long: ABC transporter patM (1394 aa).

The disordered stretch occupies residues 1–41; it reads MVDNYHSSLDVAKTPIQSDADAQKSEAETEGPSSKSSQIAA. The ABC transporter 1 domain occupies 98–341; the sequence is SPLQNRQRKQ…FEDLGFECLS (244 aa). 6 helical membrane passes run 437–457, 467–487, 511–531, 546–566, 579–599, and 688–708; these read SLWAVELATIVVQSLVLGTLF, LFIFASALFYSVLVPALQSMA, IAYALGLVTTDVVWKVAAICY, GNFFTWFLIIYLEHLALSMFF, AVLPVGIFFNMYVLYTGLYVP, and VGINAALFVFFALCSGIGMEM. The tract at residues 727–755 is disordered; the sequence is VTHRRDKIDSETGQDQGNESSEMSAGQSN. A compositionally biased stretch (polar residues) spans 737–755; the sequence is ETGQDQGNESSEMSAGQSN. Residues 767 to 1013 form the ABC transporter 2 domain; that stretch reads DKSHNLAWTN…EAIQYFQPRS (247 aa). 808 to 815 provides a ligand contact to ATP; sequence GVSGAGKT. Transmembrane regions (helical) follow at residues 1131–1151, 1177–1197, 1219–1239, 1245–1265, 1280–1300, and 1368–1388; these read GAYNRVFSAFMSLIVGPPLGL, LAFVLSAFIVELPFTFLSSLV, FLMYELFGVFATSLAQLCASL, AAFAANGFFFMFCNTFAGTLS, ISPLFYLGEGVTVDVLQDLPI, and IGVFICFIAFNFTMVLVMTYL.

This sequence belongs to the ABC transporter superfamily. ABCG family. PDR (TC 3.A.1.205) subfamily.

The protein resides in the vacuole membrane. It is found in the cell membrane. The protein operates within mycotoxin biosynthesis; patulin biosynthesis. In terms of biological role, ABC transporter; part of the gene cluster that mediates the biosynthesis of patulin, an acetate-derived tetraketide mycotoxin produced by several fungal species that shows antimicrobial properties against several bacteria. May be involved in the secretion of E-ascladiol to be converted to patulin by the secreted patulin synthase patE. This chain is ABC transporter patM, found in Penicillium expansum (Blue mold rot fungus).